A 499-amino-acid chain; its full sequence is Glutamyl-tRNA(Gln) amidotransferase subunit A (499 aa).

Residues Lys79 and Ser154 each act as charge relay system in the active site. Ser178 (acyl-ester intermediate) is an active-site residue.

Belongs to the amidase family. GatA subfamily. In terms of assembly, heterotrimer of A, B and C subunits.

It carries out the reaction L-glutamyl-tRNA(Gln) + L-glutamine + ATP + H2O = L-glutaminyl-tRNA(Gln) + L-glutamate + ADP + phosphate + H(+). In terms of biological role, allows the formation of correctly charged Gln-tRNA(Gln) through the transamidation of misacylated Glu-tRNA(Gln) in organisms which lack glutaminyl-tRNA synthetase. The reaction takes place in the presence of glutamine and ATP through an activated gamma-phospho-Glu-tRNA(Gln). The protein is Glutamyl-tRNA(Gln) amidotransferase subunit A of Psychrobacter sp. (strain PRwf-1).